Reading from the N-terminus, the 299-residue chain is MTITFQAVIAKLNEFWAQQGCLIAQPFDTEKGAGTMNPHTFLRAIGPEPWSVAYVEPCRRPTDGRYGENPNRVQHYFQYQVLIKPSPDNIQEVYLDSLRALGIQPEDHDIRFVEDNWESPTLGAWGVGWEVWLDGMEVTQFTYFQQCGGIDCRPVSIEITYGLERLAMYLQNVEAIDQIQWNEKLSYGDIFWQGEVEQCTYNFEASNPDLLFQLFALYEQEAGQLIERGLALPSLEYVLKCSHAFNLLDARGVIAVTERTRYIGRIRNLAREVAHIYLQQREALGFPLDKKVDKPISLV.

The protein belongs to the class-II aminoacyl-tRNA synthetase family. Tetramer of two alpha and two beta subunits.

The protein resides in the cytoplasm. The enzyme catalyses tRNA(Gly) + glycine + ATP = glycyl-tRNA(Gly) + AMP + diphosphate. The sequence is that of Glycine--tRNA ligase alpha subunit (glyQ) from Synechocystis sp. (strain ATCC 27184 / PCC 6803 / Kazusa).